The following is an 843-amino-acid chain: Protein P (843 aa).

The terminal protein domain (TP) stretch occupies residues 1–177 (MPLSYPHFRK…FCGSPYSWEQ (177 aa)). The segment at 178–346 (ELQHGSTSLN…YCLSHIINLL (169 aa)) is spacer. The interval 284 to 308 (EANPSLSTSKRHTSTGNAVELNPVP) is disordered. Residues 347–690 (EDWGPCYEHG…YMNLYPVARQ (344 aa)) form a polymerase/reverse transcriptase domain (RT) region. Residues 357–600 (QHHIRTPRTP…YNLHFMGYVI (244 aa)) form the Reverse transcriptase domain. Asp429, Asp551, and Asp552 together coordinate Mg(2+).

This sequence belongs to the hepadnaviridae P protein family.

It carries out the reaction DNA(n) + a 2'-deoxyribonucleoside 5'-triphosphate = DNA(n+1) + diphosphate. It catalyses the reaction Endonucleolytic cleavage to 5'-phosphomonoester.. Activated by host HSP70 and HSP40 in vitro to be able to bind the epsilon loop of the pgRNA. Because deletion of the RNase H region renders the protein partly chaperone-independent, the chaperones may be needed indirectly to relieve occlusion of the RNA-binding site by this domain. Inhibited by several reverse-transcriptase inhibitors: Lamivudine, Adefovir and Entecavir. Multifunctional enzyme that converts the viral RNA genome into dsDNA in viral cytoplasmic capsids. This enzyme displays a DNA polymerase activity that can copy either DNA or RNA templates, and a ribonuclease H (RNase H) activity that cleaves the RNA strand of RNA-DNA heteroduplexes in a partially processive 3'- to 5'-endonucleasic mode. Neo-synthesized pregenomic RNA (pgRNA) are encapsidated together with the P protein, and reverse-transcribed inside the nucleocapsid. Initiation of reverse-transcription occurs first by binding the epsilon loop on the pgRNA genome, and is initiated by protein priming, thereby the 5'-end of (-)DNA is covalently linked to P protein. Partial (+)DNA is synthesized from the (-)DNA template and generates the relaxed circular DNA (RC-DNA) genome. After budding and infection, the RC-DNA migrates in the nucleus, and is converted into a plasmid-like covalently closed circular DNA (cccDNA). The activity of P protein does not seem to be necessary for cccDNA generation, and is presumably released from (+)DNA by host nuclear DNA repair machinery. The protein is Protein P of Homo sapiens (Human).